A 150-amino-acid chain; its full sequence is NmrA-like family domain-containing protein 1 (150 aa).

NADP(+) is bound by residues 7–12, 33–37, and Lys-71; these read GATGAQ and RNPEQ.

The protein belongs to the NmrA-type oxidoreductase family. As to quaternary structure, homodimer. Interacts with ASS1. Interaction is enhanced by low NADPH/NADP(+) ratios, which results in inhibition of ASS1 activity.

It is found in the cytoplasm. The protein localises to the perinuclear region. Its subcellular location is the nucleus. Redox sensor protein. Undergoes restructuring and subcellular redistribution in response to changes in intracellular NADPH/NADP(+) levels. At low NADPH concentrations the protein is found mainly as a monomer, and binds argininosuccinate synthase (ASS1), the enzyme involved in nitric oxide synthesis. Association with ASS1 impairs its activity and reduces the production of nitric oxide, which subsecuently prevents apoptosis. Under normal NADPH concentrations, the protein is found as a dimer and hides the binding site for ASS1. The homodimer binds one molecule of NADPH. Has higher affinity for NADPH than for NADP(+). Binding to NADPH is necessary to form a stable dimer. In Rattus norvegicus (Rat), this protein is NmrA-like family domain-containing protein 1.